The sequence spans 247 residues: tRNA pseudouridine synthase A (247 aa).

D52 (nucleophile) is an active-site residue. Y110 is a substrate binding site.

Belongs to the tRNA pseudouridine synthase TruA family. Homodimer.

The enzyme catalyses uridine(38/39/40) in tRNA = pseudouridine(38/39/40) in tRNA. Its function is as follows. Formation of pseudouridine at positions 38, 39 and 40 in the anticodon stem and loop of transfer RNAs. This Hyphomonas neptunium (strain ATCC 15444) protein is tRNA pseudouridine synthase A.